Here is a 73-residue protein sequence, read N- to C-terminus: uncharacterized protein (73 aa).

The N-terminal stretch at 1–21 is a signal peptide; sequence MTLFSSLSSLSTGSLKSSVSS. Residues 1 to 38 show a composition bias toward low complexity; sequence MTLFSSLSSLSTGSLKSSVSSIETGSSSGSFGSNETSG. Residues 1–43 form a disordered region; the sequence is MTLFSSLSSLSTGSLKSSVSSIETGSSSGSFGSNETSGWGSHH. Asparagine 34 is a glycosylation site (N-linked (GlcNAc...) asparagine).

The protein localises to the secreted. This is an uncharacterized protein from Dictyostelium discoideum (Social amoeba).